Consider the following 301-residue polypeptide: uncharacterized protein (301 aa).

Residues serine 44 and tyrosine 107 each act as charge relay system in the active site. Tyrosine 133 functions as the Proton donor in the catalytic mechanism. The active-site Schiff-base intermediate with substrate is lysine 162.

The protein belongs to the DapA family. As to quaternary structure, homotetramer.

It localises to the cytoplasm. This is an uncharacterized protein from Pyrobaculum islandicum (strain DSM 4184 / JCM 9189 / GEO3).